The following is a 357-amino-acid chain: Peptide chain release factor 1 (357 aa).

The residue at position 233 (Gln-233) is an N5-methylglutamine.

It belongs to the prokaryotic/mitochondrial release factor family. Post-translationally, methylated by PrmC. Methylation increases the termination efficiency of RF1.

Its subcellular location is the cytoplasm. Its function is as follows. Peptide chain release factor 1 directs the termination of translation in response to the peptide chain termination codons UAG and UAA. The sequence is that of Peptide chain release factor 1 from Syntrophus aciditrophicus (strain SB).